The primary structure comprises 185 residues: Ribose 1,5-bisphosphate phosphokinase PhnN (185 aa).

Residue 10–17 participates in ATP binding; sequence GPSGSGKD.

The protein belongs to the ribose 1,5-bisphosphokinase family.

The catalysed reaction is alpha-D-ribose 1,5-bisphosphate + ATP = 5-phospho-alpha-D-ribose 1-diphosphate + ADP. It functions in the pathway metabolic intermediate biosynthesis; 5-phospho-alpha-D-ribose 1-diphosphate biosynthesis; 5-phospho-alpha-D-ribose 1-diphosphate from D-ribose 5-phosphate (route II): step 3/3. In terms of biological role, catalyzes the phosphorylation of ribose 1,5-bisphosphate to 5-phospho-D-ribosyl alpha-1-diphosphate (PRPP). Accepts ATP but not GTP as a phosphoryl donor, and uses ribose 1,5-bisphosphate but not ribose, ribose 1-phosphate, or ribose 5-phosphate as a phosphoryl acceptor. This is Ribose 1,5-bisphosphate phosphokinase PhnN (phnN) from Escherichia coli (strain K12).